Reading from the N-terminus, the 372-residue chain is 3,5-dihydroxyphenylacetyl-CoA synthase (372 aa).

Cys-160 is an active-site residue.

Belongs to the thiolase-like superfamily. Chalcone/stilbene synthases family.

The catalysed reaction is 4 malonyl-CoA + 4 H(+) = (3,5-dihydroxyphenyl)acetyl-CoA + 4 CO2 + 3 CoA + H2O. It functions in the pathway antibiotic biosynthesis. Functionally, involved in the biosynthesis of the nonproteinogenic amino acid monomer (S)-3,5-dihydroxyphenylglycine (Dpg) responsible of the production of balhimycin antibiotic. Catalyzes the Claisen condensation of four molecules of malonyl-CoA to yield 3,5-dihydroxyphenylacetyl-CoA (DPA-CoA) and three free coenzyme A (CoA). DpgA requires the presence of the dehydratases DpgB and DpgD to facilitate the aromatization of the DPA-S-DgpA or DPA-S-CoA intermediate. The chain is 3,5-dihydroxyphenylacetyl-CoA synthase from Amycolatopsis balhimycina.